Consider the following 158-residue polypeptide: Mitotic-spindle organizing protein 2 (158 aa).

Residue S34 is modified to Phosphoserine. A disordered region spans residues 81–158 (AGQRVASDSQ…PGRSPPRSGT (78 aa)). Gly residues predominate over residues 110 to 119 (KGGGALGGGP). S152 carries the post-translational modification Phosphoserine.

It belongs to the MOZART2 family. Associates with the gamma-tubulin ring complex (gTuRC) consisting of TUBGCP2, TUBGCP3, TUBGCP4, TUBGCP5 and TUBGCP6 and gamma-tubulin TUBG1 or TUBG2; within the complex, interacts with TUBGCP2; the interaction plays a role in gTuRC activation.

It is found in the cytoplasm. The protein localises to the cytoskeleton. Its subcellular location is the microtubule organizing center. The protein resides in the centrosome. It localises to the spindle. In terms of biological role, required for the recruitment and the assembly of the gamma-tubulin ring complex (gTuRC) at the centrosome. The gTuRC regulates the minus-end nucleation of alpha-beta tubulin heterodimers that grow into microtubule protafilaments, a critical step in centrosome duplication and spindle formation. The sequence is that of Mitotic-spindle organizing protein 2 (MZT2) from Bos taurus (Bovine).